Reading from the N-terminus, the 544-residue chain is Chaperonin GroEL (544 aa).

Residues 29-32 (TLGP), 86-90 (DGTTT), G413, 477-479 (DVL), and D493 each bind ATP.

This sequence belongs to the chaperonin (HSP60) family. As to quaternary structure, forms a cylinder of 14 subunits composed of two heptameric rings stacked back-to-back. Interacts with the co-chaperonin GroES.

It localises to the cytoplasm. It carries out the reaction ATP + H2O + a folded polypeptide = ADP + phosphate + an unfolded polypeptide.. Together with its co-chaperonin GroES, plays an essential role in assisting protein folding. The GroEL-GroES system forms a nano-cage that allows encapsulation of the non-native substrate proteins and provides a physical environment optimized to promote and accelerate protein folding. In Clostridium kluyveri (strain NBRC 12016), this protein is Chaperonin GroEL.